A 331-amino-acid polypeptide reads, in one-letter code: Lipoate-protein ligase LplJ (331 aa).

The BPL/LPL catalytic domain occupies 27-214; that stretch reads DPEQQYLLFY…HIFNTNDVGN (188 aa). ATP contacts are provided by residues Arg69, 74–77, and Lys131; that span reads GAVY. Residue Lys131 participates in (R)-lipoate binding.

The protein belongs to the LplA family.

Its subcellular location is the cytoplasm. It catalyses the reaction L-lysyl-[lipoyl-carrier protein] + (R)-lipoate + ATP = N(6)-[(R)-lipoyl]-L-lysyl-[lipoyl-carrier protein] + AMP + diphosphate + H(+). It functions in the pathway protein modification; protein lipoylation via exogenous pathway; protein N(6)-(lipoyl)lysine from lipoate: step 1/2. It participates in protein modification; protein lipoylation via exogenous pathway; protein N(6)-(lipoyl)lysine from lipoate: step 2/2. Functionally, catalyzes both the ATP-dependent activation of exogenously supplied lipoate to lipoyl-AMP and the transfer of the activated lipoyl onto the lipoyl domains of lipoate-dependent enzymes. Is also able to use octanoate as substrate. This is Lipoate-protein ligase LplJ (lplJ) from Bacillus subtilis (strain 168).